The sequence spans 1403 residues: MDYNVKDFGALGDGVSDDTAAIQAAIDAAHAAGGGTVYLPAGEYRVSGGEEPSDGCLTIKSNVHIVGAGMGETVIKMVDGWTQNVTGMVRSAYGEETSNFGMSDLTLDGNRDNLSAKVDGWFNGYIPGQDGADRDVTLERVEIREMSGYGFDPHEQTINLTIRDSVAHDNSLDGFVADYQVGGVFENNVSYNNDRHGFNIVTSTNDFVLSNNVAYGNGGAGLVVQRGSYDLPHPYDILIDGGAYYDNALEGVQLKMAHDVTLQNAEIYGNGLYGVRVYGAQDVQILDNQIHDNSQNGAYAEVLLQSYDDTAGVSGNFYVTTGTWLEGNVISGSANSTYGIQERADGTDYSSLYANSIDGVQTGAVRLYGANSTVSSQSGSGQQATLEGSAGNDALSGTEAHETLLGQAGDDRLNGDAGNDILDGGAGRDNLTGGAGADTFRFSARTDSYRTDSASFNDLITDFDADEDSIDLSALGFTGLGDGYNGTLLLKTNAEGTRTYLKSYEADAQGRRFEIALDGNFTGLFNDNNLLFDAAPATGTEGSDNLLGTDAGETLLGYGGNDTLNGGAGDDILVGGAGRDSLTGGAGADVFRFDALSDSQRNYTTGDNQADRILDFDPTLDRIDVSALGFTGLGNGRNGTLAVVLNSAGDRTDLKSYDTDANGYSFELSLAGNYQGQLSAEQFVFATSQGGQMTIIEGTDGNDTLQGTEANERLLGLDGRDNLNGGAGDDILDGGAGRDTLTGGTGADTFLFSTRTDSYRTDSASFNDLITDFDPTQDRIDLSGLGFSGFGNGYDGTLLLQVNAAGTRTYLKSFEADANGQRFEIALDGDFSGQLDSGNVIFEPAVFNAKDFGALGDGASDDRPAIQAAIDAAYAAGGGTVYLPAGEYRVSPTGEPGDGCLMLKDGVYLAGDGIGETVIKLIDGSDQKITGMVRSAYGEETSNFGMSDLTLDGNRDNTSGKVDGWFNGYIPGQDGADRNVTIERVEIREMSGYGFDPHEQTINLTIRDSVAHDNGLDGFVADYLVDSVFENNVAYNNDRHGFNIVTSTYDFVMTNNVAYGNGGAGLTIQRGSEDLAQPTDILIDGGAYYDNALEGVLFKMTNNVTLQNAEIYGNGSSGVRLYGTEDVQILDNQIHDNSQNGTYPEVLLQAFDDSQVTGELYETLNTRIEGNLIDASDNANYAVRERDDGSDYTTLVDNDISGGQVASVQLSGAHSSLSGGTVEVPQGTDGNDVLVGSDANDQLYGGAGDDRLDGGAGDDLLDGGAGRDDLTGGTGADTFVFAARTDSYRTDAGVFNDLILDFDASEDRIDLSALGFSGFGDGYNGTLLVQLSSAGTRTYLKSYEEDLEGRRFEVALDGDHTGDLSAANVVFADDGSAAVASSDPAATQLEVVGSSGTQTDQLA.

7 PbH1 repeats span residues D133–E155, T157–Y179, Q180–T202, T204–R226, A257–G279, A280–V302, and T320–G359. 2 disordered regions span residues S372–L395 and A408–R428. 8 Hemolysin-type calcium-binding repeats span residues G388–T403, G406–L422, G424–F440, G557–L573, V574–F591, E697–E712, G716–L732, and G734–F750. 8 PbH1 repeats span residues D977 to E999, T1001 to Y1023, L1024 to T1046, T1048 to R1070, T1101 to G1123, T1124 to V1146, T1163 to E1185, and S1190 to G1212. Hemolysin-type calcium-binding repeat units follow at residues G1227–L1243, Y1244–L1261, and G1263–F1279.

Belongs to the D-mannuronate C5-epimerase family. It depends on Ca(2+) as a cofactor.

The protein localises to the secreted. It catalyses the reaction [(1-&gt;4)-beta-D-mannuronosyl](n) = [alginate](n). Its pathway is glycan biosynthesis; alginate biosynthesis. With respect to regulation, inhibited by zinc. Functionally, converts beta-D-mannuronic acid (M) to alpha-L-guluronic acid (G), producing a polymer with gel-forming capacity, required for the formation of the cyst coat. The polypeptide is Mannuronan C5-epimerase AlgE1 (Azotobacter vinelandii).